Here is a 297-residue protein sequence, read N- to C-terminus: GTPase Era (297 aa).

One can recognise an Era-type G domain in the interval 5-173 (RAGFVSFVGR…TTELMRLLPV (169 aa)). The segment at 13–20 (GRPNVGKS) is G1. Position 13–20 (13–20 (GRPNVGKS)) interacts with GTP. A G2 region spans residues 39–43 (QTTRR). The interval 60–63 (DTPG) is G3. GTP is bound by residues 60-64 (DTPGV) and 123-126 (TKID). The G4 stretch occupies residues 123–126 (TKID). Residues 152 to 154 (VSA) form a G5 region. The KH type-2 domain occupies 205–283 (VEDELPHSLA…FLSIRVKVAK (79 aa)).

Belongs to the TRAFAC class TrmE-Era-EngA-EngB-Septin-like GTPase superfamily. Era GTPase family. As to quaternary structure, monomer.

It is found in the cytoplasm. The protein resides in the cell membrane. In terms of biological role, an essential GTPase that binds both GDP and GTP, with rapid nucleotide exchange. Plays a role in 16S rRNA processing and 30S ribosomal subunit biogenesis and possibly also in cell cycle regulation and energy metabolism. This Leifsonia xyli subsp. xyli (strain CTCB07) protein is GTPase Era.